Consider the following 387-residue polypeptide: Acetylajmalan esterase (387 aa).

A signal peptide spans methionine 1 to glycine 22. Residue serine 36 is the Nucleophile of the active site. 5 N-linked (GlcNAc...) asparagine glycosylation sites follow: asparagine 98, asparagine 180, asparagine 199, asparagine 249, and asparagine 296. Active-site residues include aspartate 337 and histidine 340.

It belongs to the 'GDSL' lipolytic enzyme family.

It carries out the reaction 17-O-acetylajmaline + H2O = ajmaline + acetate + H(+). The enzyme catalyses 17-O-acetylnorajmaline + H2O = norajmaline + acetate + H(+). The protein operates within alkaloid biosynthesis; ajmaline biosynthesis. Functionally, acetylesterase involved in the biosynthesis of ajmaline-type monoterpenoid indole alkaloids (MIAs) natural products, important plant-derived pharmaceuticals used in the therapy of heart disorders. Deacetylates 17-O-acetylajmaline and 17-O-acetylnorajmaline to produce ajmaline and norajmaline, but is inactive toward other acetylated alkaloids. The protein is Acetylajmalan esterase of Rauvolfia serpentina (Serpentine wood).